The chain runs to 442 residues: 3-isopropylmalate dehydratase large subunit (442 aa).

3 residues coordinate [4Fe-4S] cluster: cysteine 347, cysteine 407, and cysteine 410.

The protein belongs to the aconitase/IPM isomerase family. LeuC type 1 subfamily. Heterodimer of LeuC and LeuD. [4Fe-4S] cluster serves as cofactor.

The enzyme catalyses (2R,3S)-3-isopropylmalate = (2S)-2-isopropylmalate. It participates in amino-acid biosynthesis; L-leucine biosynthesis; L-leucine from 3-methyl-2-oxobutanoate: step 2/4. In terms of biological role, catalyzes the isomerization between 2-isopropylmalate and 3-isopropylmalate, via the formation of 2-isopropylmaleate. This chain is 3-isopropylmalate dehydratase large subunit, found in Buchnera aphidicola subsp. Uroleucon helianthicola.